Reading from the N-terminus, the 143-residue chain is uncharacterized protein (143 aa).

It localises to the cytoplasm. The protein resides in the nucleus. This is an uncharacterized protein from Schizosaccharomyces pombe (strain 972 / ATCC 24843) (Fission yeast).